A 477-amino-acid polypeptide reads, in one-letter code: Histone-lysine N-methyltransferase SUV39H2 (477 aa).

Residues 1 to 59 (MATARAKARGSEAGARCHRAPGPPPRPKARRTARRRRAETLTARRSRPSAGERRAGSQR) are disordered. The span at 27-37 (PKARRTARRRR) shows a compositional bias: basic residues. Residues 118–176 (YEVEYLCDYKVAKGVEYYLVKWKGWPDSTNTWEPLRNLRCPQLLRQFSDDKKTYLAQER) enclose the Chromo domain. Residues 256-314 (FGCSCTDCFFDKCCPAEAGVVLAYNKKQQIKIQPGTPIYECNSRCRCGPECPNRIVQKG) form the Pre-SET domain. Cys-258, Cys-260, Cys-263, Cys-268, Cys-269, Cys-296, Cys-300, Cys-302, and Cys-306 together coordinate Zn(2+). In terms of domain architecture, SET spans 317–440 (YSLCIFKTSN…AGEELTFDYQ (124 aa)). S-adenosyl-L-methionine contacts are provided by residues 328 to 330 (CGW), Tyr-371, and 397 to 398 (NH). Zn(2+) is bound at residue Cys-400. 3 positions are modified to phosphoserine: Ser-448, Ser-451, and Ser-455. A Post-SET domain is found at 461 to 477 (VRTQCKCGAETCRGYLN). Zn(2+) contacts are provided by Cys-465, Cys-467, and Cys-472.

It belongs to the class V-like SAM-binding methyltransferase superfamily. Histone-lysine methyltransferase family. Suvar3-9 subfamily. In terms of assembly, interacts with SMAD5. The large PER complex involved in the histone methylation is composed of at least PER2, CBX3, TRIM28, SUV39H1 and/or SUV39H2; CBX3 mediates the formation of the complex. In terms of processing, ubiquitinated by the DCX(DCAF13) E3 ubiquitin ligase complex, leading to its degradation. As to expression, testis specific; predominant expression in type B spermatogonia and preleptotene spermatocytes.

The protein resides in the nucleus. It is found in the chromosome. The protein localises to the centromere. The catalysed reaction is L-lysyl(9)-[histone H3] + 3 S-adenosyl-L-methionine = N(6),N(6),N(6)-trimethyl-L-lysyl(9)-[histone H3] + 3 S-adenosyl-L-homocysteine + 3 H(+). Histone methyltransferase that specifically trimethylates 'Lys-9' of histone H3 using monomethylated H3 'Lys-9' as substrate. H3 'Lys-9' trimethylation represents a specific tag for epigenetic transcriptional repression by recruiting HP1 (CBX1, CBX3 and/or CBX5) proteins to methylated histones. Mainly functions in heterochromatin regions, thereby playing a central role in the establishment of constitutive heterochromatin at pericentric and telomere regions. H3 'Lys-9' trimethylation is also required to direct DNA methylation at pericentric repeats. SUV39H1 is targeted to histone H3 via its interaction with RB1 and is involved in many processes, such as cell cycle regulation, transcriptional repression and regulation of telomere length. May participate in regulation of higher-order chromatin organization during spermatogenesis. Recruited by the large PER complex to the E-box elements of the circadian target genes such as PER2 itself or PER1, contributes to the conversion of local chromatin to a heterochromatin-like repressive state through H3 'Lys-9' trimethylation. This is Histone-lysine N-methyltransferase SUV39H2 (Suv39h2) from Mus musculus (Mouse).